Here is a 34-residue protein sequence, read N- to C-terminus: Photosystem II reaction center protein Psb30 (34 aa).

A helical membrane pass occupies residues 6 to 26 (VIGQLVSTGLIGLLGPAVIIL).

This sequence belongs to the Psb30/Ycf12 family. As to quaternary structure, PSII is composed of 1 copy each of membrane proteins PsbA, PsbB, PsbC, PsbD, PsbE, PsbF, PsbH, PsbI, PsbJ, PsbK, PsbL, PsbM, PsbT, PsbX, PsbY, PsbZ, Psb30/Ycf12, peripheral proteins of the oxygen-evolving complex and a large number of cofactors. It forms dimeric complexes.

The protein localises to the plastid. It localises to the chloroplast thylakoid membrane. In terms of biological role, a core subunit of photosystem II (PSII), probably helps stabilize the reaction center. This chain is Photosystem II reaction center protein Psb30, found in Skeletonema costatum (Marine centric diatom).